Consider the following 621-residue polypeptide: Endoglucanase 25 (621 aa).

The disordered stretch occupies residues 1-26 (MYGRDPWGGPLEINTADSATDDDRSR). The Cytoplasmic portion of the chain corresponds to 1 to 70 (MYGRDPWGGP…DLGCIIVSRK (70 aa)). A polarized targeting signal 1 (PTS1) region spans residues 48 to 49 (LL). Residues 59 to 62 (YVDL) form a polarized targeting signal 2 (PTS2) region. The chain crosses the membrane as a helical; Signal-anchor for type II membrane protein span at residues 71–91 (IFVWTVGTLVAAALLAGFITL). The Extracellular portion of the chain corresponds to 92 to 621 (IVKTVPRHHP…PPPPPAPWKP (530 aa)). Residues Asn108 and Asn133 are each glycosylated (N-linked (GlcNAc...) asparagine). The active-site Nucleophile is Asp165. Asn216, Asn324, Asn345, Asn408, and Asn425 each carry an N-linked (GlcNAc...) asparagine glycan. Active-site residues include His513 and Asp561. Asn567 carries N-linked (GlcNAc...) asparagine glycosylation. Residue Glu570 is part of the active site.

The protein belongs to the glycosyl hydrolase 9 (cellulase E) family. Glycosylated. N-glycosylation of KOR in the endoplasmic reticulum followed by N-glycan modifications in the Golgi are essential for catalytic activity. In terms of tissue distribution, highly expressed in roots and stems, at intermediate levels in leaves and flowers, and at lower levels in siliques. Expressed in xylem (at protein level).

It localises to the cell membrane. It carries out the reaction Endohydrolysis of (1-&gt;4)-beta-D-glucosidic linkages in cellulose, lichenin and cereal beta-D-glucans.. Functionally, required for cellulose microfibril formation. Involved in cell wall assembly during cell elongation and cell plate maturation in cytokinesis. Required for secondary cell wall formation in the developing xylem. May cycle through different intracellular compartments, including plasma membrane. This Arabidopsis thaliana (Mouse-ear cress) protein is Endoglucanase 25 (KOR).